The primary structure comprises 109 residues: YNINVIVMVCREIELGKKKCERYWADRGDSKRFGDITVTLSKKEDLKDGYCLRTIKAEKGNEIRYIKQFHYTSWPDHGVPKTCLEILSLINHVRDVQSYSEDETTPLCV.

In terms of domain architecture, Tyrosine-protein phosphatase spans 1–109; that stretch reads YNINVIVMVC…SEDETTPLCV (109 aa). Asp-76 is a binding site for substrate.

It belongs to the protein-tyrosine phosphatase family.

The enzyme catalyses O-phospho-L-tyrosyl-[protein] + H2O = L-tyrosyl-[protein] + phosphate. In Styela plicata (Wrinkled sea squirt), this protein is Tyrosine-protein phosphatase 6 (STY-6).